We begin with the raw amino-acid sequence, 278 residues long: Potassium/proton antiporter CemA (278 aa).

Transmembrane regions (helical) follow at residues 61–81 (IFLL…FDFG), 155–175 (AVKN…LMIT), 203–223 (IILF…EVII), and 238–258 (FIFL…KYWI).

The protein belongs to the CemA family.

The protein resides in the plastid. It localises to the chloroplast inner membrane. The catalysed reaction is K(+)(in) + H(+)(out) = K(+)(out) + H(+)(in). Functionally, contributes to K(+)/H(+) antiport activity by supporting proton efflux to control proton extrusion and homeostasis in chloroplasts in a light-dependent manner to modulate photosynthesis. Prevents excessive induction of non-photochemical quenching (NPQ) under continuous-light conditions. Indirectly promotes efficient inorganic carbon uptake into chloroplasts. This chain is Potassium/proton antiporter CemA, found in Porphyra purpurea (Red seaweed).